The primary structure comprises 398 residues: MSFNRDDDSKLKFKTSKKLKVSATFESMNLKPDLLRGIYFYGFEYPSSIQSRAISQIISGKDVIAQAQSGTGKTATFTIGLLQAIDSKSKELQALVLSPTRELASQSESVISNLGDYLNVTAHACTGGKALQQDIKKVSKNCQVVSGTPGRVLDMIKRQVLNVRNCKILVLDEADELLGETLGFKQQIYDIFTKLPPTIQVVVVSATMSKDILEITKKFMSDPVKILVKRDEISLDVIKQYYVDVEKEEWKFDTLCDLYDSLTITQCVIFCNTRKKVDWLSRKLTQTNFSVSSMHGDMKQEERDQVMNDFRSGKARVLISTDVWARGIDVQQISLVINYDIPDNLENYIHRIGRSGRFGRKGVAINFITKEERPKLKEIESHYRIKIKPTPANLEELS.

The Q motif motif lies at alanine 23–serine 51. Positions isoleucine 54–isoleucine 226 constitute a Helicase ATP-binding domain. Residue alanine 67–threonine 74 coordinates ATP. Positions aspartate 172–aspartate 175 match the DEAD box motif. A Helicase C-terminal domain is found at valine 237–serine 398.

It belongs to the DEAD box helicase family. DDX48/FAL1 subfamily.

The protein localises to the nucleus. The protein resides in the nucleolus. The enzyme catalyses ATP + H2O = ADP + phosphate + H(+). Functionally, ATP-dependent RNA helicase involved in 40S ribosomal subunit biogenesis. Required for the processing and cleavage of 35S pre-rRNA at sites A0, A1, and A2, leading to mature 18S rRNA. This is ATP-dependent RNA helicase FAL1 (FAL1) from Kluyveromyces lactis (strain ATCC 8585 / CBS 2359 / DSM 70799 / NBRC 1267 / NRRL Y-1140 / WM37) (Yeast).